The primary structure comprises 88 residues: Small ribosomal subunit protein bS20 (88 aa).

Residues 1-11 show a composition bias toward basic and acidic residues; it reads MANIKSSEKDI. 2 disordered regions span residues 1 to 31 and 69 to 88; these read MANI…LRTQ and SKNA…SSAA.

This sequence belongs to the bacterial ribosomal protein bS20 family.

Binds directly to 16S ribosomal RNA. This chain is Small ribosomal subunit protein bS20, found in Leptospira interrogans serogroup Icterohaemorrhagiae serovar copenhageni (strain Fiocruz L1-130).